The primary structure comprises 239 residues: Superoxide dismutase [Mn] 3 (239 aa).

Positions 1–19 are enriched in polar residues; sequence ASTQQTPAQSPTASPTVST. The segment at 1–20 is disordered; that stretch reads ASTQQTPAQSPTASPTVSTP. Residues 1-30 form the signal peptide; it reads ASTQQTPAQSPTASPTVSTPVAYVDRPLTA. Histidine 57, histidine 112, aspartate 195, and histidine 199 together coordinate Mn(2+).

The protein belongs to the iron/manganese superoxide dismutase family. As to quaternary structure, homodimer. Mn(2+) is required as a cofactor.

The catalysed reaction is 2 superoxide + 2 H(+) = H2O2 + O2. Its function is as follows. Destroys superoxide anion radicals which are normally produced within the cells and which are toxic to biological systems. The polypeptide is Superoxide dismutase [Mn] 3 (sodA3) (Leptolyngbya boryana (Plectonema boryanum)).